The primary structure comprises 46 residues: U1-plectoxin-Pt1f (46 aa).

Intrachain disulfides connect Cys-4-Cys-18, Cys-11-Cys-24, Cys-17-Cys-35, Cys-21-Cys-44, and Cys-26-Cys-33.

Belongs to the neurotoxin 02 (plectoxin) family. 02 (plectoxin) subfamily. In terms of tissue distribution, expressed by the venom gland.

The protein resides in the secreted. Potent toxin that may paralyze and/or kill insect pests such as H.virescens (lepidoptera), S.exigua (beet armyworm) and M.sexta (tobacco hornworm). The chain is U1-plectoxin-Pt1f from Plectreurys tristis (Spider).